We begin with the raw amino-acid sequence, 434 residues long: Chaperone SurA (434 aa).

The signal sequence occupies residues 1 to 22 (MKKWKSSLLGIAIWSLAASSMA). 2 PpiC domains span residues 173–274 (TVQF…KVND) and 283–383 (VTEV…EVLD).

Its subcellular location is the periplasm. The catalysed reaction is [protein]-peptidylproline (omega=180) = [protein]-peptidylproline (omega=0). Chaperone involved in the correct folding and assembly of outer membrane proteins. Recognizes specific patterns of aromatic residues and the orientation of their side chains, which are found more frequently in integral outer membrane proteins. May act in both early periplasmic and late outer membrane-associated steps of protein maturation. The protein is Chaperone SurA of Photobacterium profundum (strain SS9).